The sequence spans 96 residues: Salivary protein FS50 (96 aa).

A signal peptide spans 1–19 (MKWILVLALVCLAVEYSYS). Intrachain disulfides connect cysteine 26-cysteine 71, cysteine 50-cysteine 78, cysteine 63-cysteine 91, and cysteine 67-cysteine 93.

It localises to the secreted. Functionally, salivary protein that inhibits host voltage-gated sodium channel Nav1.5/SCN5A. The chain is Salivary protein FS50 from Xenopsylla cheopis (Oriental rat flea).